We begin with the raw amino-acid sequence, 146 residues long: UPF0178 protein R01393 (146 aa).

The protein belongs to the UPF0178 family.

This is UPF0178 protein R01393 from Rhizobium meliloti (strain 1021) (Ensifer meliloti).